The following is a 189-amino-acid chain: Peptidyl-tRNA hydrolase (189 aa).

A tRNA-binding site is contributed by tyrosine 14. Catalysis depends on histidine 19, which acts as the Proton acceptor. TRNA contacts are provided by phenylalanine 64, asparagine 66, and asparagine 112.

Belongs to the PTH family. Monomer.

It is found in the cytoplasm. It carries out the reaction an N-acyl-L-alpha-aminoacyl-tRNA + H2O = an N-acyl-L-amino acid + a tRNA + H(+). Functionally, hydrolyzes ribosome-free peptidyl-tRNAs (with 1 or more amino acids incorporated), which drop off the ribosome during protein synthesis, or as a result of ribosome stalling. In terms of biological role, catalyzes the release of premature peptidyl moieties from peptidyl-tRNA molecules trapped in stalled 50S ribosomal subunits, and thus maintains levels of free tRNAs and 50S ribosomes. This is Peptidyl-tRNA hydrolase from Sphingopyxis alaskensis (strain DSM 13593 / LMG 18877 / RB2256) (Sphingomonas alaskensis).